The primary structure comprises 443 residues: Tol-Pal system protein TolB (443 aa).

The N-terminal stretch at 1–33 (MKIGIINTKIRTVFSAFACMIAASLVCTMPARA) is a signal peptide.

It belongs to the TolB family. The Tol-Pal system is composed of five core proteins: the inner membrane proteins TolA, TolQ and TolR, the periplasmic protein TolB and the outer membrane protein Pal. They form a network linking the inner and outer membranes and the peptidoglycan layer.

It localises to the periplasm. Its function is as follows. Part of the Tol-Pal system, which plays a role in outer membrane invagination during cell division and is important for maintaining outer membrane integrity. The polypeptide is Tol-Pal system protein TolB (Brucella canis (strain ATCC 23365 / NCTC 10854 / RM-666)).